The following is a 758-amino-acid chain: Vitamin K-dependent gamma-carboxylase (758 aa).

The interval 1–22 (MAVSAGSARTSPSSDKVQKDKA) is disordered. The residue at position 2 (Ala-2) is an N-acetylalanine. Topologically, residues 2–60 (AVSAGSARTSPSSDKVQKDKAELISGPRQDSRIGKLLGFEWTDLSSWRRLVTLLNRPTD) are cytoplasmic. The helical transmembrane segment at 61 to 81 (PASLAVFRFLFGFLMVLDIPQ) threads the bilayer. The Lumenal portion of the chain corresponds to 82–113 (ERGLSSLDRKYLDGLDVCRFPLLDALRPLPLD). Cys-99 and Cys-450 are joined by a disulfide. The helical transmembrane segment at 114–134 (WMYLVYTIMFLGALGMMLGLC) threads the bilayer. Topologically, residues 135–136 (YR) are cytoplasmic. The helical transmembrane segment at 137–157 (ISCVLFLLPYWYVFLLDKTSW) threads the bilayer. Over 158-292 (NNHSYLYGLL…VSYFHCMNSQ (135 aa)) the chain is Lumenal. Lys-218 functions as the Proton acceptor in the catalytic mechanism. A helical transmembrane segment spans residues 293-313 (LFSIGMFSYVMLASSPLFCSP). Over 314-361 (EWPRKLVSYCPRRLQQLLPLKAAPQPSVSCVYKRSRGKSGQKPGLRHQ) the chain is Cytoplasmic. Residues 362–382 (LGAAFTLLYLLEQLFLPYSHF) traverse the membrane as a helical segment. Residues 383–758 (LTQGYNNWTN…SNPDPVHSEF (376 aa)) lie on the Lumenal side of the membrane. Residues Asn-459 and Asn-550 are each glycosylated (N-linked (GlcNAc...) asparagine). The interval 732 to 758 (GELNPSNTDSSHSNPPESNPDPVHSEF) is disordered. A compositionally biased stretch (polar residues) spans 735–747 (NPSNTDSSHSNPP).

The protein belongs to the vitamin K-dependent gamma-carboxylase family. In terms of assembly, monomer. May interact with CALU.

The protein localises to the endoplasmic reticulum membrane. The catalysed reaction is 4-carboxy-L-glutamyl-[protein] + 2,3-epoxyphylloquinone + H2O + H(+) = phylloquinol + L-glutamyl-[protein] + CO2 + O2. In terms of biological role, mediates the vitamin K-dependent carboxylation of glutamate residues to calcium-binding gamma-carboxyglutamate (Gla) residues with the concomitant conversion of the reduced hydroquinone form of vitamin K to vitamin K epoxide. Catalyzes gamma-carboxylation of various proteins, such as blood coagulation factors (F2, F7, F9 and F10), osteocalcin (BGLAP) or matrix Gla protein (MGP). The protein is Vitamin K-dependent gamma-carboxylase (GGCX) of Homo sapiens (Human).